Consider the following 60-residue polypeptide: Mastoparan-VT4 (60 aa).

A signal peptide spans 1-27 (MKNPILILFTAFIALLGFFGMSAEALA). AXPX repeat units lie at residues 27–30 (ADPK), 31–34 (ADPL), 35–38 (AGPN), and 41–44 (ADPE). The propeptide occupies 28–45 (DPKADPLAGPNPDADPEA). The residue at position 59 (L59) is a Leucine amide.

Belongs to the MCD family. Mastoparan subfamily. As to expression, expressed by the venom gland.

The protein localises to the secreted. Functionally, the synthetic peptide shows antimicrobial activities against Gram-negative bacteria (but not against all strains tested), Gram-positive bacteria (not all strains tested) and the fungi C.albicans and C.parapsilosis. Exhibits little hemolytic activity against washed human erythrocytes. The chain is Mastoparan-VT4 from Vespa tropica (Greater banded hornet).